The sequence spans 525 residues: Cytochrome P450 4V2 (525 aa).

The chain crosses the membrane as a helical span at residues 13 to 33 (LLLWGAASAVSLAGASLVLSL). Residues E329 and C467 each coordinate heme.

The protein belongs to the cytochrome P450 family. Requires heme as cofactor.

It is found in the endoplasmic reticulum membrane. The catalysed reaction is dodecanoate + reduced [NADPH--hemoprotein reductase] + O2 = 12-hydroxydodecanoate + oxidized [NADPH--hemoprotein reductase] + H2O + H(+). It catalyses the reaction tetradecanoate + reduced [NADPH--hemoprotein reductase] + O2 = 14-hydroxytetradecanoate + oxidized [NADPH--hemoprotein reductase] + H2O + H(+). The enzyme catalyses hexadecanoate + reduced [NADPH--hemoprotein reductase] + O2 = 16-hydroxyhexadecanoate + oxidized [NADPH--hemoprotein reductase] + H2O + H(+). It carries out the reaction (5Z,8Z,11Z,14Z,17Z)-eicosapentaenoate + reduced [NADPH--hemoprotein reductase] + O2 = 20-hydroxy-(5Z,8Z,11Z,14Z,17Z)-eicosapentaenoate + oxidized [NADPH--hemoprotein reductase] + H2O + H(+). The catalysed reaction is (4Z,7Z,10Z,13Z,16Z,19Z)-docosahexaenoate + reduced [NADPH--hemoprotein reductase] + O2 = 22-hydroxy-(4Z,7Z,10Z,13Z,16Z,19Z)-docosahexaenoate + oxidized [NADPH--hemoprotein reductase] + H2O + H(+). It functions in the pathway lipid metabolism; fatty acid metabolism. With respect to regulation, inhibited by N-hydroxy-N'-(4-n-butyl-2-methylphenyl formamidine)(HET0016) with an IC(50) of 38 nM. Functionally, a cytochrome P450 monooxygenase involved in fatty acid metabolism in the eye. Catalyzes the omega-hydroxylation of polyunsaturated fatty acids (PUFAs) docosahexaenoate (DHA) and its precursor eicosapentaenoate (EPA), and may contribute to the homeostasis of these retinal PUFAs. Omega hydroxylates saturated fatty acids such as laurate, myristate and palmitate, the catalytic efficiency decreasing in the following order: myristate &gt; laurate &gt; palmitate (C14&gt;C12&gt;C16). Mechanistically, uses molecular oxygen inserting one oxygen atom into a substrate, and reducing the second into a water molecule, with two electrons provided by NADPH via cytochrome P450 reductase (CPR; NADPH-ferrihemoprotein reductase). The protein is Cytochrome P450 4V2 (CYP4V2) of Pongo abelii (Sumatran orangutan).